Reading from the N-terminus, the 134-residue chain is Nogalonic acid methyl ester cyclase (134 aa).

Residue Gln-95 coordinates nogalaviketone. Catalysis depends on Asp-111, which acts as the Proton donor/acceptor.

This sequence belongs to the polyketide cyclase DnrD family. As to quaternary structure, homotetramer. Dimer of dimers.

It carries out the reaction nogalaviketone = methyl nogalonate. Its pathway is antibiotic biosynthesis. Involved in the biosynthesis of the aromatic polyketide antibiotic nogalamycin. Catalyzes the formation of nogalaviketone from nogalonic acid methyl ester (NAME), the last ring-closure step in the biosynthesis of nogalamycin. The chain is Nogalonic acid methyl ester cyclase from Streptomyces nogalater.